Consider the following 187-residue polypeptide: Ubiquinone biosynthesis protein COQ4 homolog, mitochondrial (187 aa).

4 residues coordinate Zn(2+): His-77, Asp-78, His-81, and Glu-93.

This sequence belongs to the COQ4 family. Component of a multi-subunit COQ enzyme complex. The cofactor is Zn(2+).

Its subcellular location is the mitochondrion inner membrane. The catalysed reaction is a 4-hydroxy-3-methoxy-5-(all-trans-polyprenyl)benzoate + H(+) = a 2-methoxy-6-(all-trans-polyprenyl)phenol + CO2. It functions in the pathway cofactor biosynthesis; ubiquinone biosynthesis. In terms of biological role, lyase that catalyzes the C1-decarboxylation of 4-hydroxy-3-methoxy-5-(all-trans-polyprenyl)benzoic acid into 2-methoxy-6-(all-trans-polyprenyl)phenol during ubiquinone biosynthesis. This is Ubiquinone biosynthesis protein COQ4 homolog, mitochondrial from Leishmania braziliensis.